A 68-amino-acid chain; its full sequence is uncharacterized protein (68 aa).

Residues A24–F44 traverse the membrane as a helical segment.

It localises to the endoplasmic reticulum. The protein localises to the membrane. This is an uncharacterized protein from Saccharomyces cerevisiae (strain ATCC 204508 / S288c) (Baker's yeast).